Reading from the N-terminus, the 158-residue chain is 2-C-methyl-D-erythritol 2,4-cyclodiphosphate synthase (158 aa).

2 residues coordinate a divalent metal cation: aspartate 9 and histidine 11. 4-CDP-2-C-methyl-D-erythritol 2-phosphate is bound by residues 9-11 and 35-36; these read DVH and HS. Position 43 (histidine 43) interacts with a divalent metal cation. 4-CDP-2-C-methyl-D-erythritol 2-phosphate-binding positions include 57 to 59, 62 to 66, 133 to 136, phenylalanine 140, and arginine 143; these read DIG, FPDTD, and TTTE.

The protein belongs to the IspF family. In terms of assembly, homotrimer. A divalent metal cation serves as cofactor.

It catalyses the reaction 4-CDP-2-C-methyl-D-erythritol 2-phosphate = 2-C-methyl-D-erythritol 2,4-cyclic diphosphate + CMP. Its pathway is isoprenoid biosynthesis; isopentenyl diphosphate biosynthesis via DXP pathway; isopentenyl diphosphate from 1-deoxy-D-xylulose 5-phosphate: step 4/6. Involved in the biosynthesis of isopentenyl diphosphate (IPP) and dimethylallyl diphosphate (DMAPP), two major building blocks of isoprenoid compounds. Catalyzes the conversion of 4-diphosphocytidyl-2-C-methyl-D-erythritol 2-phosphate (CDP-ME2P) to 2-C-methyl-D-erythritol 2,4-cyclodiphosphate (ME-CPP) with a corresponding release of cytidine 5-monophosphate (CMP). In Actinobacillus succinogenes (strain ATCC 55618 / DSM 22257 / CCUG 43843 / 130Z), this protein is 2-C-methyl-D-erythritol 2,4-cyclodiphosphate synthase.